Reading from the N-terminus, the 121-residue chain is Phosphoribosyl-ATP pyrophosphatase (121 aa).

This sequence belongs to the PRA-PH family.

It is found in the cytoplasm. The enzyme catalyses 1-(5-phospho-beta-D-ribosyl)-ATP + H2O = 1-(5-phospho-beta-D-ribosyl)-5'-AMP + diphosphate + H(+). Its pathway is amino-acid biosynthesis; L-histidine biosynthesis; L-histidine from 5-phospho-alpha-D-ribose 1-diphosphate: step 2/9. In Burkholderia multivorans (strain ATCC 17616 / 249), this protein is Phosphoribosyl-ATP pyrophosphatase.